Consider the following 211-residue polypeptide: tRNA (guanine-N(7)-)-methyltransferase (211 aa).

Positions 43, 68, 95, and 117 each coordinate S-adenosyl-L-methionine. Aspartate 117 is an active-site residue. Substrate-binding positions include lysine 121, aspartate 153, and 190-193; that span reads TEYE.

The protein belongs to the class I-like SAM-binding methyltransferase superfamily. TrmB family.

The enzyme catalyses guanosine(46) in tRNA + S-adenosyl-L-methionine = N(7)-methylguanosine(46) in tRNA + S-adenosyl-L-homocysteine. It functions in the pathway tRNA modification; N(7)-methylguanine-tRNA biosynthesis. In terms of biological role, catalyzes the formation of N(7)-methylguanine at position 46 (m7G46) in tRNA. In Alkaliphilus oremlandii (strain OhILAs) (Clostridium oremlandii (strain OhILAs)), this protein is tRNA (guanine-N(7)-)-methyltransferase.